The sequence spans 1300 residues: MARPKLWPWGILLLVSLLSAGFNLDTMNVCPSLDIRSEVAELRRLENCSVVEGHLQILLMFTATGEDFRSLSFPHLTQVTDYLLLFRVYGLESLRDLFPNLAVIRGAHLFLGYALVIFEMPHLRDVGLPALGAVLHGSVRVEKNQELCHLSTIDWGLLQPTPSTNYIVGNKLGEECADVCPGTLGAAGEPCARTTFNGHTDYRCWTSSHCQRVCPCPQGLACTISGECCHTECLGGCSQPEDPRACVACRHFYYQSACHRACPLGTYEHESWRCVTAESCANLRSVPGRASTFGIHQGKCLAQCPPGFTRNGSSIFCHKCEGLCPKECKVGTKTIDSVQAAQDLVGCTHVEGSLILNLRRGYNLEPELQRSLGLVETITGFLKIKHSFALVSLSFFKNLKLIRGDTMVDGNYTLYVLDNQNLQQLGPWVSAGLTIPVGKIYFAFNPRLCLEHIYRLEEVTGTRGRQNKAEINPRTNGDRAACQTRTLRFVSNVTEADRILLRWERYEPLEARDLLSFIVYYKESPFQNATEHVGPDACGSQSWNLLDVELPLSRTQEPGVILAPLKPWTQYAVFVRAITLTTAEDSPHQGAQSPIVYLWTLPAAPTVPQDVISSSNSSSHLLVRWKPPTQRNGNITYYLVLWQRLAEDGDLYLNDYCHRGLRLPTSNHDPRFDREDGDLEAELELGCCPCQHAPPGQVLPALEAQEASFQKKFENFLHNAITIPKPPWKVTSIHRNLQRDAGRHRRAIGSPRPGGNSSDFEIQEDKVPRERAVLGGLRHFTEYRIDIHACNHAAHIVGCSAATFVFARTMPRREADDIPGKLSWEAASKSSVLLRWFEPPDPNGLILKYEIKYRRLGEEATVLCVSRLRYAKVGGVQLALLPPGNYSARVRATSLAGNGSWTDSVAFYIPGPEEEDSGGLHILLTVTPAGLMLLIILAALGFFYSRKRNGTLYTSVNPEYLSASDMYIPDEWEVPREQISIIRELGQGSFGMVYEGVAKGLEAGEESTPVALKTVNELASPRERIEFLKEASVMKAFQCHHVVRLLGVVSQGQPTLVIMELMTRGDLKSHLRSLRPEAENNPGIPRPALGDMIQMAGEIADGMAYLAANKFVHRDLAARNCMVSQDFTVKIGDFGMTRDVYETDYYRKGGKGLLPVRWMAPESLKDGIFTTHSDVWSFGVVLWEIVTLAEQPYQGLSNEQVLKFVMDGGVLEELEDCPHQLQELMSSCWQQNPRLRPTFTQILNSIQKELRPSFRLLSFYHSPECQGGCGLQPTTDAESSSPPTSKGASDCSLQNGGPEH.

Residues 1 to 26 (MARPKLWPWGILLLVSLLSAGFNLDT) form the signal peptide. N-linked (GlcNAc...) asparagine glycosylation is present at N47. Cystine bridges form between C214–C222, C216–C228, C229–C237, C233–C246, C249–C258, C262–C274, C280–C300, C304–C317, and C320–C324. N-linked (GlcNAc...) asparagine glycosylation is present at N311. N411, N492, N528, N616, N634, N756, N885, and N898 each carry an N-linked (GlcNAc...) asparagine glycan. 2 consecutive Fibronectin type-III domains span residues 483–603 (QTRT…TLPA) and 607–707 (VPQD…AQEA). C657 and C864 are oxidised to a cystine. The tract at residues 740-762 (DAGRHRRAIGSPRPGGNSSDFEI) is disordered. The Extracellular segment spans residues 747-921 (AIGSPRPGGN…PEEEDSGGLH (175 aa)). One can recognise a Fibronectin type-III 3 domain in the interval 818 to 912 (IPGKLSWEAA…DSVAFYIPGP (95 aa)). The chain crosses the membrane as a helical span at residues 922–943 (ILLTVTPAGLMLLIILAALGFF). Residues 944 to 1300 (YSRKRNGTLY…CSLQNGGPEH (357 aa)) lie on the Cytoplasmic side of the membrane. The 276-residue stretch at 979–1254 (ISIIRELGQG…SIQKELRPSF (276 aa)) folds into the Protein kinase domain. ATP contacts are provided by residues 985–993 (LGQGSFGMV) and K1013. The active-site Proton acceptor is D1115. Residues Y1145 and Y1146 each carry the phosphotyrosine; by autocatalysis modification. A disordered region spans residues 1270-1300 (GLQPTTDAESSSPPTSKGASDCSLQNGGPEH). Residues 1272-1300 (QPTTDAESSSPPTSKGASDCSLQNGGPEH) show a composition bias toward polar residues.

This sequence belongs to the protein kinase superfamily. Tyr protein kinase family. Insulin receptor subfamily. As to quaternary structure, probable tetramer of 2 alpha and 2 beta chains linked by disulfide bonds. The alpha chains contribute to the formation of the ligand-binding domain, while the beta chains carry the kinase domain. In terms of processing, autophosphorylated on tyrosine residues between pH 7.9 and pH 10.5.

It localises to the membrane. The catalysed reaction is L-tyrosyl-[protein] + ATP = O-phospho-L-tyrosyl-[protein] + ADP + H(+). Its function is as follows. Receptor with tyrosine-protein kinase activity. Functions as a pH sensing receptor which is activated by increased extracellular pH. Activates an intracellular signaling pathway that involves IRS1 and AKT1/PKB. The sequence is that of Insulin receptor-related protein (INSRR) from Cavia porcellus (Guinea pig).